A 201-amino-acid polypeptide reads, in one-letter code: Proteasome subunit beta type-2 (201 aa).

At M1 the chain carries N-acetylmethionine.

It belongs to the peptidase T1B family. As to quaternary structure, the 26S proteasome consists of a 20S proteasome core and two 19S regulatory subunits. The 20S proteasome core is a barrel-shaped complex made of 28 subunits that are arranged in four stacked rings. The two outer rings are each formed by seven alpha subunits, and the two inner rings are formed by seven beta subunits. The proteolytic activity is exerted by three beta-subunits PSMB5, PSMB6 and PSMB7. (Microbial infection) Interacts with HIV-1 protein Tat.

It is found in the cytoplasm. The protein localises to the nucleus. Functionally, non-catalytic component of the 20S core proteasome complex involved in the proteolytic degradation of most intracellular proteins. This complex plays numerous essential roles within the cell by associating with different regulatory particles. Associated with two 19S regulatory particles, forms the 26S proteasome and thus participates in the ATP-dependent degradation of ubiquitinated proteins. The 26S proteasome plays a key role in the maintenance of protein homeostasis by removing misfolded or damaged proteins that could impair cellular functions, and by removing proteins whose functions are no longer required. Associated with the PA200 or PA28, the 20S proteasome mediates ubiquitin-independent protein degradation. This type of proteolysis is required in several pathways including spermatogenesis (20S-PA200 complex) or generation of a subset of MHC class I-presented antigenic peptides (20S-PA28 complex). The chain is Proteasome subunit beta type-2 from Homo sapiens (Human).